The following is a 274-amino-acid chain: ATP synthase subunit b 2 (274 aa).

A helical transmembrane segment spans residues 2–22; sequence HIDWFVLLAQLVNFLILIYLL.

This sequence belongs to the ATPase B chain family. F-type ATPases have 2 components, F(1) - the catalytic core - and F(0) - the membrane proton channel. F(1) has five subunits: alpha(3), beta(3), gamma(1), delta(1), epsilon(1). F(0) has three main subunits: a(1), b(2) and c(10-14). The alpha and beta chains form an alternating ring which encloses part of the gamma chain. F(1) is attached to F(0) by a central stalk formed by the gamma and epsilon chains, while a peripheral stalk is formed by the delta and b chains.

Its subcellular location is the cell inner membrane. Functionally, f(1)F(0) ATP synthase produces ATP from ADP in the presence of a proton or sodium gradient. F-type ATPases consist of two structural domains, F(1) containing the extramembraneous catalytic core and F(0) containing the membrane proton channel, linked together by a central stalk and a peripheral stalk. During catalysis, ATP synthesis in the catalytic domain of F(1) is coupled via a rotary mechanism of the central stalk subunits to proton translocation. Its function is as follows. Component of the F(0) channel, it forms part of the peripheral stalk, linking F(1) to F(0). The chain is ATP synthase subunit b 2 from Syntrophus aciditrophicus (strain SB).